The chain runs to 305 residues: MSVILNNGLLKRESFVIGRFEVLEPTINILLVNLMPNRLQTEKQFTRLLSHLPINVRVTFAVPSEHKIRHDTDAIMTNYVTLNDIWHKKFDGMIVTGAPVDRMKFEQIDYWDEFRHLLEWRKTHVTESLFACWAAYGAGYAERNFPVKALSEKISGVFQASQIFKRHSLLKDLENISMPQSRYFTVPNFGVARRLKVAGDDILGAFILRDEHVNSTYITGHFEYDTETLENEYLRDIAIDPNTIKPKNYFYNNKPTNTWQTYAEKFFVNWGELLMEKMTSSRSTIPTLNQERNKLGLGTSQCKYL.

The active-site Acyl-thioester intermediate is C132. Residues K153 and S181 each coordinate substrate. Residue H221 is the Proton acceptor of the active site. E223 is an active-site residue. Residue R235 participates in substrate binding.

The protein belongs to the MetA family.

It localises to the cytoplasm. The enzyme catalyses L-homoserine + acetyl-CoA = O-acetyl-L-homoserine + CoA. Its pathway is amino-acid biosynthesis; L-methionine biosynthesis via de novo pathway; O-acetyl-L-homoserine from L-homoserine: step 1/1. In terms of biological role, transfers an acetyl group from acetyl-CoA to L-homoserine, forming acetyl-L-homoserine. The protein is Homoserine O-acetyltransferase of Leuconostoc mesenteroides subsp. mesenteroides (strain ATCC 8293 / DSM 20343 / BCRC 11652 / CCM 1803 / JCM 6124 / NCDO 523 / NBRC 100496 / NCIMB 8023 / NCTC 12954 / NRRL B-1118 / 37Y).